The primary structure comprises 491 residues: Probable ribonuclease FAU-1 (491 aa).

This sequence belongs to the FAU-1 family.

Probable RNase involved in rRNA stability through maturation and/or degradation of precursor rRNAs. Binds to RNA in loop regions with AU-rich sequences. In Thermofilum pendens (strain DSM 2475 / Hrk 5), this protein is Probable ribonuclease FAU-1.